Here is an 89-residue protein sequence, read N- to C-terminus: Small ribosomal subunit protein uS15 (89 aa).

This sequence belongs to the universal ribosomal protein uS15 family. As to quaternary structure, part of the 30S ribosomal subunit. Forms a bridge to the 50S subunit in the 70S ribosome, contacting the 23S rRNA.

In terms of biological role, one of the primary rRNA binding proteins, it binds directly to 16S rRNA where it helps nucleate assembly of the platform of the 30S subunit by binding and bridging several RNA helices of the 16S rRNA. Functionally, forms an intersubunit bridge (bridge B4) with the 23S rRNA of the 50S subunit in the ribosome. This chain is Small ribosomal subunit protein uS15, found in Brevibacillus brevis (strain 47 / JCM 6285 / NBRC 100599).